The chain runs to 310 residues: Malate dehydrogenase (310 aa).

Residues 7-12 (GAGNVG) and Asp32 contribute to the NAD(+) site. Substrate contacts are provided by Arg81 and Arg87. NAD(+)-binding positions include Asn94 and 117-119 (VSN). Substrate is bound by residues Asn119 and Arg150. The Proton acceptor role is filled by His174.

Belongs to the LDH/MDH superfamily. MDH type 3 family.

It carries out the reaction (S)-malate + NAD(+) = oxaloacetate + NADH + H(+). Its function is as follows. Catalyzes the reversible oxidation of malate to oxaloacetate. In Chloroherpeton thalassium (strain ATCC 35110 / GB-78), this protein is Malate dehydrogenase.